The chain runs to 128 residues: Secreted RxLR effector protein 57 (128 aa).

A signal peptide spans 1 to 31 (MHRKRLRVVLSATLLDLITCVQLMLDPLVRS). Residues 58 to 61 (RILR) carry the RxLR motif.

It belongs to the RxLR effector family.

It localises to the secreted. The protein localises to the host nucleus. The protein resides in the host cytoplasm. Functionally, secreted effector that completely suppresses the host cell death induced by cell death-inducing proteins. In Plasmopara viticola (Downy mildew of grapevine), this protein is Secreted RxLR effector protein 57.